Consider the following 323-residue polypeptide: Germination protease (323 aa).

Residues 1–6 constitute a propeptide that is removed on maturation; it reads MSVRTD.

It belongs to the peptidase A25 family. In terms of assembly, homotetramer. Post-translationally, autoproteolytically processed. The inactive tetrameric zymogen termed p46 autoprocesses to a smaller form termed p41, which is active only during spore germination.

It carries out the reaction Endopeptidase action with P4 Glu or Asp, P1 preferably Glu &gt; Asp, P1' hydrophobic and P2' Ala.. In terms of biological role, initiates the rapid degradation of small, acid-soluble proteins during spore germination. The chain is Germination protease from Clostridium tetani (strain Massachusetts / E88).